The sequence spans 77 residues: Large ribosomal subunit protein eL13 (77 aa).

This sequence belongs to the eukaryotic ribosomal protein eL13 family.

The chain is Large ribosomal subunit protein eL13 from Sulfurisphaera tokodaii (strain DSM 16993 / JCM 10545 / NBRC 100140 / 7) (Sulfolobus tokodaii).